A 213-amino-acid polypeptide reads, in one-letter code: mRNA-decapping protein OPG121 (213 aa).

Residues E16 and R50 each coordinate N(7)-methyl-GTP. The 180-residue stretch at K30–L209 folds into the Nudix hydrolase domain. The Nudix box motif lies at G111 to D132. The active-site Nucleophile is E126. Residues E126 and E130 each coordinate Mg(2+). D151 lines the N(7)-methyl-GTP pocket. E183 serves as a coordination point for Mg(2+).

It belongs to the Nudix hydrolase family. The cofactor is Mg(2+). Requires Mn(2+) as cofactor.

The catalysed reaction is a 5'-end (N(7)-methyl 5'-triphosphoguanosine)-guanosine in mRNA + H2O = a 5'-end phospho-guanosine in mRNA + N(7)-methyl-GDP + 2 H(+). Decapping enzyme that remove the protective 5'-cap from both host and viral mRNAs to commit transcripts for decay by the cellular exonuclease XRN1. Accelerates viral and cellular mRNA turnover to eliminate competing host mRNAs and allow stage-specific synthesis of viral proteins. Acceleration of the turnover of cellular transcripts may even promote the shutoff of host protein synthesis. This chain is mRNA-decapping protein OPG121 (OPG121), found in Vaccinia virus (strain Western Reserve) (VACV).